The sequence spans 216 residues: Transmembrane emp24 domain-containing protein eca (216 aa).

Positions 1–20 (MRDQFISLALILCVLHSACG) are cleaved as a signal peptide. Over 21–182 (LYFHISETER…FRHTSESTNS (162 aa)) the chain is Lumenal. Positions 30–126 (RKCFIEEVPD…QLRVHLDIQV (97 aa)) constitute a GOLD domain. A coiled-coil region spans residues 134 to 164 (ANVAQKEKLTELQLRIRQLLDQVEQITKEQN). The chain crosses the membrane as a helical span at residues 183-203 (RVLWWSLAQTVVLVCMGFWQM). The Cytoplasmic portion of the chain corresponds to 204–216 (RHLKSFFEAKKLV). The Prevents secretion from ER motif lies at 213 to 216 (KKLV).

Belongs to the EMP24/GP25L family.

It is found in the endoplasmic reticulum membrane. Functionally, eca and bai are essential, though not redundant, for dorsoventral patterning of the embryo. Specifically required during early embryogenesis for the activity of maternal tkv, while the zygotic tkv is not affected. Involved in Golgi organization. This chain is Transmembrane emp24 domain-containing protein eca, found in Drosophila simulans (Fruit fly).